The primary structure comprises 508 residues: uncharacterized protein (508 aa).

It is found in the virion. This is an uncharacterized protein from Acanthamoeba polyphaga mimivirus (APMV).